The chain runs to 422 residues: Tyrosine--tRNA ligase (422 aa).

Tyrosine 36 provides a ligand contact to L-tyrosine. The 'HIGH' region signature appears at 41-50; that stretch reads PTADSLHIGH. Residues tyrosine 175 and glutamine 179 each contribute to the L-tyrosine site. The short motif at 235-239 is the 'KMSKS' region element; sequence KFGKT. ATP is bound at residue lysine 238. Residues 354–411 enclose the S4 RNA-binding domain; that stretch reads TSLQEALTKSKLATSRSQARYFIKSNAITINAHKQSKIEYIFQDSDRIYNLYTLLKRG.

It belongs to the class-I aminoacyl-tRNA synthetase family. TyrS type 1 subfamily. In terms of assembly, homodimer.

The protein localises to the cytoplasm. The catalysed reaction is tRNA(Tyr) + L-tyrosine + ATP = L-tyrosyl-tRNA(Tyr) + AMP + diphosphate + H(+). Its function is as follows. Catalyzes the attachment of tyrosine to tRNA(Tyr) in a two-step reaction: tyrosine is first activated by ATP to form Tyr-AMP and then transferred to the acceptor end of tRNA(Tyr). This Blochmanniella floridana protein is Tyrosine--tRNA ligase.